A 207-amino-acid chain; its full sequence is Protein lin-7 homolog B (207 aa).

Residues 1–13 (MAALVEPLGLERD) carry the Kinase interacting site motif. Residues 10-65 (LERDVSRAVELLERLQRSGELPPQKLQALQRVLQSRFCSAIREVYEQLYDTLDITG) enclose the L27 domain. The 83-residue stretch at 93-175 (VVELPKTDEG…SVKLVVRYTP (83 aa)) folds into the PDZ domain. The segment at 187–207 (KMRSARRRQQHHSYSSLESRG) is disordered. The segment covering 198–207 (HSYSSLESRG) has biased composition (polar residues).

The protein belongs to the lin-7 family. As to quaternary structure, forms two exclusive ternary complexes with CASK and CASKIN1. The brain-specific heterotrimeric complex (LIN-10-LIN-2-LIN-7 complex) composed of at least APBA1, CASK, and LIN7, associates with the motor protein KIF17 to transport vesicles along microtubules. Forms a heterotrimeric complex composed of MMP5, LIN7B and PATJ; the N-terminal L27 domain of PALS1 interacts with the L27 domain of PATJ and the C-terminal L27 domain of PALS1 interacts with the L27 domain of LIN7B. Forms a heterotrimeric complex with DLG1 and CASK via their L27 domains. Interacts with DLG4 and GRIN2B as well as CDH1 and CTNNB1, the channels KCNJ12/Kir2.2, KCNJ4/Kir2.3 and probably KCNJ2/Kir2.1 and SLC6A12/BGT-1 via its PDZ domain. The association of LIN7A with cadherin and beta-catenin is calcium-dependent, occurs at synaptic junctions and requires the actin cytoskeleton. Interacts with EGFR, ERBB2, ERBB3 and ERBB4 with both PDZ and KID domains. Associates with KIF17 via APBA1. Interacts with ASIC3. Interacts with TOPK. Interacts with RTKN. Interacts with APBA1. Interacts with MPP7. Interacts with DLG2. Interacts with DLG3. Expressed only in brain.

The protein resides in the cell membrane. The protein localises to the basolateral cell membrane. Its subcellular location is the cell junction. It is found in the postsynaptic density membrane. It localises to the tight junction. In terms of biological role, plays a role in establishing and maintaining the asymmetric distribution of channels and receptors at the plasma membrane of polarized cells. Forms membrane-associated multiprotein complexes that may regulate delivery and recycling of proteins to the correct membrane domains. The tripartite complex composed of LIN7 (LIN7A, LIN7B or LIN7C), CASK and APBA1 associates with the motor protein KIF17 to transport vesicles containing N-methyl-D-aspartate (NMDA) receptor subunit NR2B along microtubules. This complex may have the potential to couple synaptic vesicle exocytosis to cell adhesion in brain. Ensures the proper localization of GRIN2B (subunit 2B of the NMDA receptor) to neuronal postsynaptic density and may function in localizing synaptic vesicles at synapses where it is recruited by beta-catenin and cadherin. Required to localize Kir2 channels, GABA transporter (SLC6A12) and EGFR/ERBB1, ERBB2, ERBB3 and ERBB4 to the basolateral membrane of epithelial cells. May increase the amplitude of ASIC3 acid-evoked currents by stabilizing the channel at the cell surface. This Rattus norvegicus (Rat) protein is Protein lin-7 homolog B (Lin7b).